A 387-amino-acid polypeptide reads, in one-letter code: Acetylornithine aminotransferase (387 aa).

Residues 97–98 and F130 contribute to the pyridoxal 5'-phosphate site; that span reads GT. N(2)-acetyl-L-ornithine is bound at residue R133. 215–218 serves as a coordination point for pyridoxal 5'-phosphate; it reads DEVQ. K244 bears the N6-(pyridoxal phosphate)lysine mark. T273 is a binding site for pyridoxal 5'-phosphate.

This sequence belongs to the class-III pyridoxal-phosphate-dependent aminotransferase family. ArgD subfamily. In terms of assembly, homodimer. Pyridoxal 5'-phosphate serves as cofactor.

The protein localises to the cytoplasm. It carries out the reaction N(2)-acetyl-L-ornithine + 2-oxoglutarate = N-acetyl-L-glutamate 5-semialdehyde + L-glutamate. The protein operates within amino-acid biosynthesis; L-arginine biosynthesis; N(2)-acetyl-L-ornithine from L-glutamate: step 4/4. The sequence is that of Acetylornithine aminotransferase from Clostridium acetobutylicum (strain ATCC 824 / DSM 792 / JCM 1419 / IAM 19013 / LMG 5710 / NBRC 13948 / NRRL B-527 / VKM B-1787 / 2291 / W).